The primary structure comprises 944 residues: Valine--tRNA ligase (944 aa).

The short motif at 43 to 53 is the 'HIGH' region element; that stretch reads PNVTGTLHMGH. A 'KMSKS' region motif is present at residues 550–554; sequence KMSKS. Lysine 553 is an ATP binding site. Positions 878-944 form a coiled coil; the sequence is LVDMDAERTR…TGLREQRAKL (67 aa).

Belongs to the class-I aminoacyl-tRNA synthetase family. ValS type 1 subfamily. As to quaternary structure, monomer.

Its subcellular location is the cytoplasm. The catalysed reaction is tRNA(Val) + L-valine + ATP = L-valyl-tRNA(Val) + AMP + diphosphate. Catalyzes the attachment of valine to tRNA(Val). As ValRS can inadvertently accommodate and process structurally similar amino acids such as threonine, to avoid such errors, it has a 'posttransfer' editing activity that hydrolyzes mischarged Thr-tRNA(Val) in a tRNA-dependent manner. This Xanthomonas campestris pv. campestris (strain 8004) protein is Valine--tRNA ligase.